We begin with the raw amino-acid sequence, 360 residues long: MEKYEAVRDIGSGNFGVARLMRNRETRELVAVKCIERGHRIDENVYREIINHRSLRHPNIIRFKEVILTPTHLMIVMEFAAGGELFDRICDRGRFSEDEARYFFQQLICGVSYCHHMQICHRDLKLENVLLDGSPAPRLKICDFGYSKSSVLHSRPKSAVGTPAYIAPEVLSRREYDGKLADVWSCGVTLYVMLVGAYPFEDQDDPKNIRKTIQRIMSVQYKIPDYVHISAECKQLIARIFVNNPLRRITMKEIKSHPWFLKNLPRELTETAQAMYYRRDNSVPSFSDQTSEEIMKIVQEARTMPKSSRTGYWSDAGSDEEEKEEEERPEENEEEEEDEYDKRVKEVHASGELRMSSLRI.

The region spanning 4–260 (YEAVRDIGSG…MKEIKSHPWF (257 aa)) is the Protein kinase domain. ATP-binding positions include 10–18 (IGSGNFGVA) and Lys-33. Asp-123 functions as the Proton acceptor in the catalytic mechanism. The interval 303 to 360 (TMPKSSRTGYWSDAGSDEEEKEEEERPEENEEEEEDEYDKRVKEVHASGELRMSSLRI) is disordered. A compositionally biased stretch (acidic residues) spans 317 to 339 (GSDEEEKEEEERPEENEEEEEDE). The segment covering 340–351 (YDKRVKEVHASG) has biased composition (basic and acidic residues).

Belongs to the protein kinase superfamily. Ser/Thr protein kinase family. In terms of processing, may be phosphorylated. As to expression, expressed in leaf blades, leaf sheaths and roots. Expressed in shoots and roots of young seedlings.

The catalysed reaction is L-seryl-[protein] + ATP = O-phospho-L-seryl-[protein] + ADP + H(+). The enzyme catalyses L-threonyl-[protein] + ATP = O-phospho-L-threonyl-[protein] + ADP + H(+). Its activity is regulated as follows. Activated by hyperosmotic stress. Functionally, may play a role in signal transduction of hyperosmotic response. This Oryza sativa subsp. japonica (Rice) protein is Serine/threonine-protein kinase SAPK4 (SAPK4).